The primary structure comprises 400 residues: Transcription initiation factor IIF subunit beta (400 aa).

Residues 1–19 are compositionally biased toward polar residues; the sequence is MSSGSAGAPALSNNSTNSV. A disordered region spans residues 1–47; that stretch reads MSSGSAGAPALSNNSTNSVAKEKSGNISGDEYLSQEEEVFDGNDIEN. 3 positions are modified to phosphoserine: S28, S34, and S56. Acidic residues predominate over residues 33–47; it reads LSQEEEVFDGNDIEN. Disordered regions lie at residues 165-194 and 366-400; these read QEREEELKKKQQQQKRRNNRKKFNHRVMTD and TLGELADEQTGSAGDNAQGDAEADLEDEIEMEDVV. Positions 174 to 189 are enriched in basic residues; sequence KQQQQKRRNNRKKFNH. Residues 386 to 400 show a composition bias toward acidic residues; sequence AEADLEDEIEMEDVV.

The protein belongs to the TFIIF beta subunit family. As to quaternary structure, TFIIF is composed of three different subunits: TFG1/RAP74, TFG2/RAP30 and TAF14.

Its subcellular location is the nucleus. Functionally, TFIIF is a general transcription initiation factor that binds to RNA polymerase II. Its functions include the recruitment of RNA polymerase II to the promoter bound DNA-TBP-TFIIB complex, decreasing the affinity of RNA polymerase II for non-specific DNA, allowing for the subsequent recruitment of TFIIE and TFIIH, and facilitating RNA polymerase II elongation. The protein is Transcription initiation factor IIF subunit beta (TFG2) of Saccharomyces cerevisiae (strain ATCC 204508 / S288c) (Baker's yeast).